The primary structure comprises 522 residues: Neutral amino acid uniporter 4 (522 aa).

10 consecutive transmembrane segments (helical) span residues 115–135, 181–201, 226–246, 255–275, 293–313, 329–349, 377–397, 409–429, 435–455, and 467–487; these read AGVL…IHCM, LVDW…FVFL, SLDL…LVFI, LSFF…QYVI, YPLF…VLPL, IGMA…YFCF, FGIY…ILPA, LCEF…AVLI, VISF…PPLV, and PWVI…FIAG. N-linked (GlcNAc...) asparagine glycosylation occurs at asparagine 515.

It belongs to the amino acid/polyamine transporter 2 family.

Its subcellular location is the lysosome membrane. It catalyses the reaction L-tryptophan(in) = L-tryptophan(out). The catalysed reaction is L-alanine(in) = L-alanine(out). The enzyme catalyses L-proline(in) = L-proline(out). Functionally, uniporter that mediates the transport of neutral amino acids like L-tryptophan, proline and alanine. The transport activity is sodium ions-independent, electroneutral and therefore functions via facilitated diffusion. In Xenopus laevis (African clawed frog), this protein is Neutral amino acid uniporter 4.